The following is a 326-amino-acid chain: MAAPASVMGPLGPSALGLLLLLLVVAPPRVAALVHRQPENQGISLTGSVACGRPSMEGKILGGVPAPERKWPWQVSVHYAGLHVCGGSILNEYWVLSAAHCFHRDKNIKIYDMYVGLVNLRVAGNHTQWYEVNRVILHPTYEMYHPIGGDVALVQLKTRIVFSESVLPVCLATPEVNLTSANCWATGWGLVSKQGETSDELQEMQLPLILEPWCHLLYGHMSYIMPDMLCAGDILNAKTVCEGDSGGPLVCEFNRSWLQIGIVSWGRGCSNPLYPGVYASVSYFSKWICDNIEITPTPAQPAPALSPALGPTLSVLMAMLAGWSVL.

The N-terminal stretch at 1–32 (MAAPASVMGPLGPSALGLLLLLLVVAPPRVAA) is a signal peptide. Positions 33-59 (LVHRQPENQGISLTGSVACGRPSMEGK) are cleaved as a propeptide — activation peptide. In terms of domain architecture, Peptidase S1 spans 60–293 (ILGGVPAPER…FSKWICDNIE (234 aa)). The cysteines at positions 85 and 101 are disulfide-linked. His-100 serves as the catalytic Charge relay system. Residue Asn-125 is glycosylated (N-linked (GlcNAc...) asparagine). Asp-150 (charge relay system) is an active-site residue. 3 disulfide bridges follow: Cys-183/Cys-251, Cys-214/Cys-230, and Cys-241/Cys-269. The active-site Charge relay system is the Ser-245.

This sequence belongs to the peptidase S1 family.

The protein resides in the secreted. This chain is Serine protease 38 (PRSS38), found in Homo sapiens (Human).